The chain runs to 520 residues: Aspartate-proton symporter (520 aa).

14 helical membrane-spanning segments follow: residues L13 to V33, I49 to L69, H85 to I105, T130 to W150, I161 to F181, A201 to V221, I232 to V252, I281 to S301, W345 to V365, N366 to L386, M402 to W422, V425 to Y445, A460 to G480, and G482 to I502.

The protein belongs to the amino acid-polyamine-organocation (APC) superfamily. AGT (TC 2.A.3.11) family.

It is found in the cell membrane. In terms of biological role, uptake of L-aspartate with the concomitant import of a proton. Can also transport aspartate hydroxamate and L-glutamate with lower affinity and efficiency. This is Aspartate-proton symporter (yveA) from Bacillus subtilis (strain 168).